The chain runs to 47 residues: MAVPKKRTSKSKKNLRKSQWKAQAFVQAKKALAKAKTVLKLLLNKDN.

Belongs to the bacterial ribosomal protein bL32 family.

The protein localises to the plastid. The chain is Large ribosomal subunit protein bL32c (rpl32) from Prototheca wickerhamii.